Consider the following 156-residue polypeptide: Small ribosomal subunit protein uS7 (156 aa).

The protein belongs to the universal ribosomal protein uS7 family. Part of the 30S ribosomal subunit. Contacts proteins S9 and S11.

One of the primary rRNA binding proteins, it binds directly to 16S rRNA where it nucleates assembly of the head domain of the 30S subunit. Is located at the subunit interface close to the decoding center, probably blocks exit of the E-site tRNA. The polypeptide is Small ribosomal subunit protein uS7 (Rhodospirillum rubrum (strain ATCC 11170 / ATH 1.1.1 / DSM 467 / LMG 4362 / NCIMB 8255 / S1)).